The following is a 341-amino-acid chain: tRNA N6-adenosine threonylcarbamoyltransferase (341 aa).

Residues histidine 115 and histidine 119 each contribute to the Fe cation site. Substrate contacts are provided by residues isoleucine 137–glycine 141, aspartate 170, glycine 183, aspartate 187, and asparagine 276. Aspartate 304 contacts Fe cation.

This sequence belongs to the KAE1 / TsaD family. It depends on Fe(2+) as a cofactor.

Its subcellular location is the cytoplasm. The enzyme catalyses L-threonylcarbamoyladenylate + adenosine(37) in tRNA = N(6)-L-threonylcarbamoyladenosine(37) in tRNA + AMP + H(+). In terms of biological role, required for the formation of a threonylcarbamoyl group on adenosine at position 37 (t(6)A37) in tRNAs that read codons beginning with adenine. Is involved in the transfer of the threonylcarbamoyl moiety of threonylcarbamoyl-AMP (TC-AMP) to the N6 group of A37, together with TsaE and TsaB. TsaD likely plays a direct catalytic role in this reaction. The polypeptide is tRNA N6-adenosine threonylcarbamoyltransferase (Staphylococcus aureus (strain MRSA252)).